A 245-amino-acid chain; its full sequence is Acetylglutamate kinase (245 aa).

Residues 41-42, R63, and N156 contribute to the substrate site; that span reads GG.

Belongs to the acetylglutamate kinase family. ArgB subfamily.

The protein localises to the cytoplasm. It carries out the reaction N-acetyl-L-glutamate + ATP = N-acetyl-L-glutamyl 5-phosphate + ADP. The protein operates within amino-acid biosynthesis; L-arginine biosynthesis; N(2)-acetyl-L-ornithine from L-glutamate: step 2/4. Its function is as follows. Catalyzes the ATP-dependent phosphorylation of N-acetyl-L-glutamate. In Staphylococcus epidermidis (strain ATCC 35984 / DSM 28319 / BCRC 17069 / CCUG 31568 / BM 3577 / RP62A), this protein is Acetylglutamate kinase.